Consider the following 738-residue polypeptide: Transcription activator of gluconeogenesis SMAC_06113 (738 aa).

A disordered region spans residues 1 to 65 (MPDDVGPAEA…KYDPKDPLRP (65 aa)). Basic and acidic residues-rich tracts occupy residues 28–39 (ATTKDDDEKMAE) and 51–64 (GDQKKKYDPKDPLR). Positions 74 to 102 (CYACQRAHLTCGDERPCQRCIKRGLAEAC) form a DNA-binding region, zn(2)-C6 fungal-type. 4 disordered regions span residues 255–278 (SSGAAETPPRDPSISQQGTAGDVG), 328–404 (HAYA…KRQR), 530–579 (GTNS…KEQP), and 636–673 (SVPTTAGGSGSSNGTVVNGGPDSSPAGKTERERSTGAN). Polar residues-rich tracts occupy residues 337-351 (TSLQSPSTENNSPQP) and 530-540 (GTNSDTLSVSS). In terms of domain architecture, PAS spans 475–546 (ALFEHEEFMH…SVSSKGGRGG (72 aa)). 2 stretches are compositionally biased toward low complexity: residues 568 to 579 (QQQQSQQQKEQP) and 636 to 655 (SVPTTAGGSGSSNGTVVNGG).

It belongs to the ERT1/acuK family.

It localises to the nucleus. In terms of biological role, transcription factor which regulates nonfermentable carbon utilization. Activator of gluconeogenetic genes. This chain is Transcription activator of gluconeogenesis SMAC_06113, found in Sordaria macrospora (strain ATCC MYA-333 / DSM 997 / K(L3346) / K-hell).